A 478-amino-acid polypeptide reads, in one-letter code: Noelin-2 (478 aa).

An N-terminal signal peptide occupies residues 1-16; it reads MSVPLLKIGAVLSTMA. Asn33, Asn98, Asn179, Asn299, Asn334, Asn423, and Asn465 each carry an N-linked (GlcNAc...) asparagine glycan. 2 coiled-coil regions span residues 86 to 109 and 160 to 218; these read SREL…LELR and LEQY…QKLG. Residues 218 to 470 enclose the Olfactomedin-like domain; that stretch reads GCGKLTGVSN…QVLYNVTLFH (253 aa). Cys219 and Cys401 are joined by a disulfide.

Peripherally associated with AMPAR complex. AMPAR complex consists of an inner core made of 4 pore-forming GluA/GRIA proteins (GRIA1, GRIA2, GRIA3 and GRIA4) and 4 major auxiliary subunits arranged in a twofold symmetry. One of the two pairs of distinct binding sites is occupied either by CNIH2, CNIH3 or CACNG2, CACNG3. The other harbors CACNG2, CACNG3, CACNG4, CACNG8 or GSG1L. This inner core of AMPAR complex is complemented by outer core constituents binding directly to the GluA/GRIA proteins at sites distinct from the interaction sites of the inner core constituents. Outer core constituents include at least PRRT1, PRRT2, CKAMP44/SHISA9, FRRS1L and NRN1. The proteins of the inner and outer core serve as a platform for other, more peripherally associated AMPAR constituents, including OLFM2. Alone or in combination, these auxiliary subunits control the gating and pharmacology of the AMPAR complex and profoundly impact their biogenesis and protein processing. Interacts with GRIA2. Interacts with OLFM1 and OLFM3. Interacts with SRF; the interaction promotes dissociation of SRF from the transcriptional repressor HEY2. Interacts with RUNX2. In terms of tissue distribution, expressed in the brain (at protein level). Expressed in carotid arteries and the aorta, mainly in aortic SMCs.

It is found in the secreted. Its subcellular location is the synapse. The protein localises to the membrane. The protein resides in the nucleus. It localises to the cytoplasm. Functionally, involved in transforming growth factor beta (TGF-beta)-induced smooth muscle differentiation. TGF-beta induces expression and nuclear translocation of OLFM2 where it binds to SRF, causing its dissociation from the transcriptional repressor HEY2/HERP1 and facilitating binding of SRF to target genes. Plays a role in AMPAR complex organization. Is a regulator of vascular smooth-muscle cell (SMC) phenotypic switching, that acts by promoting RUNX2 and inhibiting MYOCD binding to SRF. SMC phenotypic switching is the process through which vascular SMCs undergo transition between a quiescent contractile phenotype and a proliferative synthetic phenotype in response to pathological stimuli. SMC phenotypic plasticity is essential for vascular development and remodeling. This chain is Noelin-2 (Olfm2), found in Rattus norvegicus (Rat).